The sequence spans 334 residues: Aspartate carbamoyltransferase catalytic subunit (334 aa).

Residues Arg-71 and Thr-72 each contribute to the carbamoyl phosphate site. Lys-99 lines the L-aspartate pocket. Positions 121, 151, and 154 each coordinate carbamoyl phosphate. L-aspartate is bound by residues Arg-184 and Arg-239. Residues Gly-280 and Pro-281 each coordinate carbamoyl phosphate.

The protein belongs to the aspartate/ornithine carbamoyltransferase superfamily. ATCase family. In terms of assembly, heterododecamer (2C3:3R2) of six catalytic PyrB chains organized as two trimers (C3), and six regulatory PyrI chains organized as three dimers (R2).

The catalysed reaction is carbamoyl phosphate + L-aspartate = N-carbamoyl-L-aspartate + phosphate + H(+). It functions in the pathway pyrimidine metabolism; UMP biosynthesis via de novo pathway; (S)-dihydroorotate from bicarbonate: step 2/3. In terms of biological role, catalyzes the condensation of carbamoyl phosphate and aspartate to form carbamoyl aspartate and inorganic phosphate, the committed step in the de novo pyrimidine nucleotide biosynthesis pathway. This is Aspartate carbamoyltransferase catalytic subunit from Pseudomonas fluorescens (strain Pf0-1).